A 592-amino-acid chain; its full sequence is MMRTHYCGSLTEAQIDQTVTLCGWVHRRRDHGGVIFLDMRDRDGLVQVVIDPDTPEAFATADKARSEYVLKITGRVRRRYEGTENPNMVSGQIEVLGKEIEVLAASETPPFPLNDDTINVSEEHRLKYRFLDIRRPEMLERLRFRSKVTNLIRNYLDDHGFLDVETPILTRATPEGARDYLVPSRVQNGSFYALPQSPQLFKQLLMVGGIDRYYQIAKCFRDEDLRADRQPEFTQIDIETSFLNDDDIMDLMEGMTVKLFNDLLGVKFEKFRRMPYSEAMRDYASDKPDLRIPLKLVDVADLMQEVEFKVFAGPAKDPKGRIAALRVPGAGSLTRSQIDEYTKFVGIYGAKGLAYIKVNEIEKGIEGLQSPIVKFIEPIVMQLLERVGAENGDIVFFGADKAKIVNDAMGALRVKIGHDLNLATCEWAPLWVVDFPMFEETDDGKWTSVHHPFTLPKSSVEDVKSNPGEALSVAYDMVLNGTEVGGGSLRIYTLEMQKAIFEALGISDEEAEEKFSFLLNALRYGAPPHGGLAFGLDRLVMLMTGATSIRDVIAFPKTKTAECPLTQAPAPVEANQLRDLGIRLREQQKKEA.

L-aspartate is bound at residue E175. An aspartate region spans residues 199-202; that stretch reads QLFK. Residue R221 participates in L-aspartate binding. ATP is bound by residues 221–223 and Q230; that span reads RDE. H450 contributes to the L-aspartate binding site. Residue E483 participates in ATP binding. R490 is an L-aspartate binding site. Position 535-538 (535-538) interacts with ATP; it reads GLDR.

The protein belongs to the class-II aminoacyl-tRNA synthetase family. Type 1 subfamily. Homodimer.

The protein resides in the cytoplasm. The enzyme catalyses tRNA(Asx) + L-aspartate + ATP = L-aspartyl-tRNA(Asx) + AMP + diphosphate. In terms of biological role, aspartyl-tRNA synthetase with relaxed tRNA specificity since it is able to aspartylate not only its cognate tRNA(Asp) but also tRNA(Asn). Reaction proceeds in two steps: L-aspartate is first activated by ATP to form Asp-AMP and then transferred to the acceptor end of tRNA(Asp/Asn). This Acinetobacter baumannii (strain AB307-0294) protein is Aspartate--tRNA(Asp/Asn) ligase.